Here is a 454-residue protein sequence, read N- to C-terminus: tRNA modification GTPase MnmE (454 aa).

3 residues coordinate (6S)-5-formyl-5,6,7,8-tetrahydrofolate: arginine 23, glutamate 80, and lysine 120. A TrmE-type G domain is found at 216–377 (GMKVVIAGRP…LRDHLKQSMG (162 aa)). Asparagine 226 serves as a coordination point for K(+). GTP is bound by residues 226–231 (NAGKSS), 245–251 (TAIAGTT), 270–273 (DTAG), 335–338 (NKAD), and 358–360 (SAR). Mg(2+) is bound at residue serine 230. K(+) is bound by residues threonine 245, isoleucine 247, and threonine 250. Threonine 251 serves as a coordination point for Mg(2+). Lysine 454 is a (6S)-5-formyl-5,6,7,8-tetrahydrofolate binding site.

The protein belongs to the TRAFAC class TrmE-Era-EngA-EngB-Septin-like GTPase superfamily. TrmE GTPase family. As to quaternary structure, homodimer. Heterotetramer of two MnmE and two MnmG subunits. K(+) is required as a cofactor.

It localises to the cytoplasm. Its function is as follows. Exhibits a very high intrinsic GTPase hydrolysis rate. Involved in the addition of a carboxymethylaminomethyl (cmnm) group at the wobble position (U34) of certain tRNAs, forming tRNA-cmnm(5)s(2)U34. The protein is tRNA modification GTPase MnmE of Pectobacterium atrosepticum (strain SCRI 1043 / ATCC BAA-672) (Erwinia carotovora subsp. atroseptica).